A 1118-amino-acid polypeptide reads, in one-letter code: Repetin (1118 aa).

The segment at 1-91 is S-100-like; it reads MPQLLNSILN…VQACHHKLDS (91 aa). EF-hand domains follow at residues 13-48 and 49-84; these read KVFQDYAEYHGVGASLSKKELKQLLLTEFGDILRRP and NDPETVETILEHLDRDRNGYVDFHEYLLLVFQLVQA. Ca(2+)-binding residues include Ser27, Glu32, Asp62, Asp64, Asn66, Tyr68, and Glu73. A disordered region spans residues 94–1118; sequence YGSRTSSQKE…YVQEQAAYQY (1025 aa). Positions 100 to 115 are enriched in basic and acidic residues; that stretch reads SQKEHDQEGTRSHKFS. Residues 138-148 show a composition bias toward polar residues; the sequence is SEGQHQNVQHD. Basic and acidic residues-rich tracts occupy residues 149–164 and 172–186; these read QSQRQDKDSERHDTDP and FHGDSHYGHSERQDT. The segment covering 237 to 252 has biased composition (low complexity); sequence GQSKTSGQQSSHGQSG. Polar residues predominate over residues 259-299; sequence YSSQTSQQESDSYEQYGSQHQKSGNSQTERQGQNSQYGQTN. Tandem repeats lie at residues 273 to 284, 285 to 296, 297 to 308, 309 to 320, 321 to 332, 333 to 344, 345 to 356, 357 to 368, 369 to 380, 381 to 392, 393 to 404, 405 to 416, 417 to 428, 429 to 440, 441 to 452, 453 to 464, 465 to 476, 477 to 488, 489 to 500, 501 to 512, 513 to 524, 525 to 536, 537 to 548, 549 to 560, 561 to 572, 573 to 584, 585 to 596, 597 to 608, 609 to 620, 621 to 632, 633 to 644, 645 to 656, 657 to 668, 669 to 680, 681 to 692, 693 to 704, 705 to 716, 717 to 728, 729 to 740, 741 to 752, 753 to 764, 765 to 776, 777 to 788, 789 to 800, 801 to 812, 813 to 824, 825 to 836, and 837 to 848. Residues 273–848 are 48 X 12 AA approximate tandem repeats of Q-[KT]-[GD]-[RS]-Q-[DG]-Q-S-[PS]-H-X-G; the sequence is QYGSQHQKSG…DRQSQSSHCG (576 aa). Residues 321 to 764 are 22 X 12 AA approximate tandem repeats of Q-K-G-R-Q-D-Q-S-P-H-Q-G; it reads QKGRKDQSFQ…GRQDQSSHQG (444 aa). Composition is skewed to basic and acidic residues over residues 347-363 and 371-387; these read GRQDQSPHRGQKGRQDQ. Polar residues predominate over residues 434-466; that stretch reads DQSSHQGQKGRQDQSSHQGQKGRQDQSSHQGQK. Residues 467–481 show a composition bias toward basic and acidic residues; that stretch reads GRQDQSSHQGQREGQ. 2 stretches are compositionally biased toward polar residues: residues 482 to 535 and 543 to 570; these read DQNS…SFHY and LSSHQGQTDSQGQNSNWHRTDSQGQSFH. Polar residues-rich tracts occupy residues 587–606 and 616–643; these read DRQSQNSNWHRTDSQGQSFH and GSHQGQTDSQGQSSHWHQTDRQGQSSQQ. Residues 710 to 726 are compositionally biased toward polar residues; that stretch reads DLSSHQGQKGRQDQSPH. Composition is skewed to basic and acidic residues over residues 731 to 747 and 755 to 769; these read GRHDQSPHRGQKGRQDQ and GRQDQSSHQGQREGQ. Polar residues-rich tracts occupy residues 795–822, 833–848, and 855–864; these read LSSHQGQTDSQGQNSQWHRTDSQGQSFH, SHHGQTDRQSQSSHCG, and TENQGQNRHS. Positions 865-875 are enriched in basic and acidic residues; it reads LGTDRTRRDSY. The span at 876–889 shows a compositional bias: polar residues; that stretch reads VEQSGRSVKLSQQN. Composition is skewed to basic and acidic residues over residues 890-908, 947-965, 978-998, 1005-1045, and 1056-1065; these read SREEVRQTQSQRSHDRREQ, EQDHCGEEEYQDWDRHSVE, THEEEQSHQTSDRQTHVDEQN, QTHE…KEKY, and PNREKSHMSE.

It belongs to the S100-fused protein family. In terms of processing, potential substrate of transglutaminase. Some arginines are probably converted to citrullines by peptidylarginine deimidase. In terms of tissue distribution, detectable in the stratified internal epithelia of forestomach and tongue and to a lesser degree in normal skin epidermis, where it is restricted to the differentiated suprabasal cell layers. Overexpressed in skin tumors.

Its subcellular location is the secreted. It is found in the extracellular space. The protein resides in the extracellular matrix. Its function is as follows. Involved in the cornified cell envelope formation. Multifunctional epidermal matrix protein. This chain is Repetin (Rptn), found in Mus musculus (Mouse).